Here is a 642-residue protein sequence, read N- to C-terminus: Kinesin-like protein KIN-7L (642 aa).

A Kinesin motor domain is found at 3 to 337 (KISVAVRFRP…LQFASRAKCV (335 aa)). Positions 12 to 27 (PPTTAAPAADQSPSST) are enriched in low complexity. Positions 12–33 (PPTTAAPAADQSPSSTGGDREW) are disordered. Residue 94–101 (GQTSSGKT) participates in ATP binding. Coiled-coil stretches lie at residues 343–428 (VNEI…SNTS) and 540–612 (RQQL…FSQA).

This sequence belongs to the TRAFAC class myosin-kinesin ATPase superfamily. Kinesin family. KIN-7 subfamily.

The sequence is that of Kinesin-like protein KIN-7L from Oryza sativa subsp. japonica (Rice).